We begin with the raw amino-acid sequence, 569 residues long: Intraflagellar transport protein 74/72 (569 aa).

Coiled coils occupy residues 75-156, 201-231, and 271-298; these read ITAT…TRNE, YRSLNDENITLKQKESELRKELQEAAAVAAN, and AITLHRQIRAAKRELDAYKAKIKAAESH.

Belongs to the IFT74 family.

The protein resides in the cell projection. It is found in the cilium. Its subcellular location is the flagellum. The protein localises to the cytoplasm. It localises to the cytoskeleton. The protein resides in the flagellum axoneme. It is found in the flagellum basal body. Component of the intraflagellar transport complex B (IFT-B) involved in flagellar assembly. This is Intraflagellar transport protein 74/72 from Giardia intestinalis (strain ATCC 50803 / WB clone C6) (Giardia lamblia).